The chain runs to 118 residues: Small ribosomal subunit protein uS13 (118 aa).

A disordered region spans residues 94 to 118 (GLPLRGQRTKTNARTRKGPRKPIKK).

This sequence belongs to the universal ribosomal protein uS13 family. As to quaternary structure, part of the 30S ribosomal subunit. Forms a loose heterodimer with protein S19. Forms two bridges to the 50S subunit in the 70S ribosome.

Functionally, located at the top of the head of the 30S subunit, it contacts several helices of the 16S rRNA. In the 70S ribosome it contacts the 23S rRNA (bridge B1a) and protein L5 of the 50S subunit (bridge B1b), connecting the 2 subunits; these bridges are implicated in subunit movement. Contacts the tRNAs in the A and P-sites. The sequence is that of Small ribosomal subunit protein uS13 from Cellvibrio japonicus (strain Ueda107) (Pseudomonas fluorescens subsp. cellulosa).